Reading from the N-terminus, the 803-residue chain is Phenylalanine--tRNA ligase beta subunit (803 aa).

Positions 39–151 (SMKFSGIKIG…KNAIIGEDIK (113 aa)) constitute a tRNA-binding domain. In terms of domain architecture, B5 spans 406–482 (PKKILIKLYK…RFYGFEKIPI (77 aa)). D466 and D470 together coordinate Mg(2+). Residues 707-800 (SDIPFNYRDI…LKKNFLIEIR (94 aa)) form the FDX-ACB domain.

Belongs to the phenylalanyl-tRNA synthetase beta subunit family. Type 1 subfamily. In terms of assembly, tetramer of two alpha and two beta subunits. Mg(2+) serves as cofactor.

It localises to the cytoplasm. It carries out the reaction tRNA(Phe) + L-phenylalanine + ATP = L-phenylalanyl-tRNA(Phe) + AMP + diphosphate + H(+). This Wigglesworthia glossinidia brevipalpis protein is Phenylalanine--tRNA ligase beta subunit.